The following is a 119-amino-acid chain: Large ribosomal subunit protein uL18 (119 aa).

Residues 1-26 form a disordered region; it reads MGQNDKAARRQKIKLRSKTRGQGTAA. The segment covering 9–19 has biased composition (basic residues); that stretch reads RRQKIKLRSKT.

Belongs to the universal ribosomal protein uL18 family. In terms of assembly, part of the 50S ribosomal subunit; part of the 5S rRNA/L5/L18/L25 subcomplex. Contacts the 5S and 23S rRNAs.

This is one of the proteins that bind and probably mediate the attachment of the 5S RNA into the large ribosomal subunit, where it forms part of the central protuberance. The polypeptide is Large ribosomal subunit protein uL18 (Prosthecochloris aestuarii (strain DSM 271 / SK 413)).